The following is a 256-amino-acid chain: Small ribosomal subunit protein uS2 (256 aa).

The protein belongs to the universal ribosomal protein uS2 family.

The polypeptide is Small ribosomal subunit protein uS2 (Streptococcus equi subsp. equi (strain 4047)).